The sequence spans 193 residues: Large ribosomal subunit protein bL12cy (193 aa).

The transit peptide at 1–59 directs the protein to the chloroplast; it reads MAATTLSIATTIRSSSFSSGLASAHHFPSRPLSIEFPFSFGVSSSSTLSHRAIYLHPIS. Over residues 170 to 187 the composition is skewed to basic and acidic residues; that stretch reads GVTKDEAEEDKTQLEEAG. The segment at 170–193 is disordered; the sequence is GVTKDEAEEDKTQLEEAGAKVSIV.

Belongs to the bacterial ribosomal protein bL12 family.

It is found in the plastid. Its subcellular location is the chloroplast. This Arabidopsis thaliana (Mouse-ear cress) protein is Large ribosomal subunit protein bL12cy (RPL12B).